A 299-amino-acid polypeptide reads, in one-letter code: Probable lipid kinase YegS (299 aa).

The region spanning 2 to 133 (AEFPASLLIL…IDMAQVNKQT (132 aa)) is the DAGKc domain. ATP contacts are provided by residues threonine 40, 66 to 72 (GDGTINE), and threonine 95. Mg(2+)-binding residues include leucine 215, aspartate 218, and leucine 220. Glutamate 271 serves as the catalytic Proton acceptor.

Belongs to the diacylglycerol/lipid kinase family. YegS lipid kinase subfamily. Requires Mg(2+) as cofactor. Ca(2+) serves as cofactor.

It is found in the cytoplasm. Probably phosphorylates lipids; the in vivo substrate is unknown. This chain is Probable lipid kinase YegS, found in Escherichia coli O17:K52:H18 (strain UMN026 / ExPEC).